The following is a 348-amino-acid chain: Large ribosomal subunit protein uL10 (348 aa).

The disordered stretch occupies residues 291–348 (LPEELRGVSAADTGAAEEEESTDEEAADADQADAAEDDDAADDDGDDEDAGDALGSLF). Over residues 305 to 341 (AAEEEESTDEEAADADQADAAEDDDAADDDGDDEDAG) the composition is skewed to acidic residues.

The protein belongs to the universal ribosomal protein uL10 family. As to quaternary structure, part of the 50S ribosomal subunit. Forms part of the ribosomal stalk which helps the ribosome interact with GTP-bound translation factors. Forms a heptameric L10(L12)2(L12)2(L12)2 complex, where L10 forms an elongated spine to which the L12 dimers bind in a sequential fashion.

Functionally, forms part of the ribosomal stalk, playing a central role in the interaction of the ribosome with GTP-bound translation factors. In Haloferax volcanii (strain ATCC 29605 / DSM 3757 / JCM 8879 / NBRC 14742 / NCIMB 2012 / VKM B-1768 / DS2) (Halobacterium volcanii), this protein is Large ribosomal subunit protein uL10.